A 321-amino-acid polypeptide reads, in one-letter code: tRNA 2-thiolation protein NcsA (321 aa).

Lysine 204 is covalently cross-linked (Glycyl lysine isopeptide (Lys-Gly) (interchain with G-Cter in SAMP2)).

This sequence belongs to the TtcA family. CTU1/NCS6/ATPBD3 subfamily. Interacts with monomeric and polymeric forms of SAMP2. Interacts with UbaA. Interacts with archaeal EF-1-alpha and Pan1. Non-sampylated protein forms a complex with archaeal CPSF1 of approximately 100 kDa. Sampylated at Lys-204 with the archaeal ubiquitin-like protein SAMP2. Polymeric chains of SAMP2 are also linked.

The protein operates within tRNA modification; 5-methoxycarbonylmethyl-2-thiouridine-tRNA biosynthesis. Its function is as follows. Required for thiolation of mcm(5)S(2)U at the wobble uridine position of tRNA specific for lysine (tRNA(Lys)). Probably acts by catalyzing adenylation of tRNA, an intermediate required for 2-thiolation. May also act as a sulfurtransferase that transfers sulfur from thiocarboxylated SAMP2 onto the uridine of tRNA at wobble position. Required for cell growth at elevated temperatures. The protein is tRNA 2-thiolation protein NcsA of Haloferax volcanii (strain ATCC 29605 / DSM 3757 / JCM 8879 / NBRC 14742 / NCIMB 2012 / VKM B-1768 / DS2) (Halobacterium volcanii).